The primary structure comprises 276 residues: Cruxhalorhodopsin-3 (276 aa).

Positions 1-21 (MPAASTAATTLLQASQSEVLG) are excised as a propeptide. Topologically, residues 22 to 25 (EIQS) are extracellular. The helical transmembrane segment at 26–51 (NFLLNSSLWVNIALAGVVILLFVAMG) threads the bilayer. At 52 to 57 (RELESS) the chain is on the cytoplasmic side. The helical transmembrane segment at 58–81 (RAKLIWVATMLVPLVSISSYAGLA) threads the bilayer. At 82–105 (SGLTVGFLQMPPGHALAGQEVLSP) the chain is on the extracellular side. A helical membrane pass occupies residues 106–127 (WGRYLTWTFSTPMILLALGLLA). Residues 128–130 (DTD) lie on the Cytoplasmic side of the membrane. Residues 131–154 (MASLFTAITMDIGMCITGLAAALV) traverse the membrane as a helical segment. Residues 155 to 157 (TSS) are Extracellular-facing. The chain crosses the membrane as a helical span at residues 158–180 (HLLRWVFYGISCAFFIAVLYVLL). Over 181–192 (VEWPADAEAAGT) the chain is Cytoplasmic. The chain crosses the membrane as a helical span at residues 193 to 216 (SEIFGTLKLLTVVLWLGYPILWAL). The Extracellular portion of the chain corresponds to 217–225 (GSEGVALLS). The chain crosses the membrane as a helical span at residues 226-254 (VGVTSWGYSGLDILAKYVFAFLLLRWVAA). Position 241 is an N6-(retinylidene)lysine (Lys-241). Topologically, residues 255 to 276 (NEDTVTQAGMSLGSGGAAPADD) are cytoplasmic.

It belongs to the archaeal/bacterial/fungal opsin family.

It localises to the cell membrane. In terms of biological role, light-driven chloride pump. The chain is Cruxhalorhodopsin-3 (choP3) from Haloarcula vallismortis (Halobacterium vallismortis).